Here is a 72-residue protein sequence, read N- to C-terminus: Alpha-elapitoxin-Dv2b (72 aa).

5 disulfides stabilise this stretch: Cys3/Cys21, Cys14/Cys42, Cys27/Cys31, Cys46/Cys57, and Cys58/Cys63.

The protein belongs to the three-finger toxin family. Long-chain subfamily. Type II alpha-neurotoxin sub-subfamily. Neurotoxin 4.7.3 differs from 4.9.3 only in that Trp-26 has undergone partial photooxidation. Expressed by the venom gland.

The protein localises to the secreted. In terms of biological role, binds with high affinity to muscular (alpha-1/CHRNA1) and neuronal (alpha-7/CHRNA7) nicotinic acetylcholine receptor (nAChR) and inhibits acetylcholine from binding to the receptor, thereby impairing neuromuscular and neuronal transmission. In Dendroaspis viridis (Western green mamba), this protein is Alpha-elapitoxin-Dv2b.